The chain runs to 479 residues: Ribosomal RNA small subunit methyltransferase F (479 aa).

S-adenosyl-L-methionine contacts are provided by residues 125–131, E149, D176, and D194; that span reads AAAPGSK. C247 functions as the Nucleophile in the catalytic mechanism.

Belongs to the class I-like SAM-binding methyltransferase superfamily. RsmB/NOP family.

The protein localises to the cytoplasm. It catalyses the reaction cytidine(1407) in 16S rRNA + S-adenosyl-L-methionine = 5-methylcytidine(1407) in 16S rRNA + S-adenosyl-L-homocysteine + H(+). In terms of biological role, specifically methylates the cytosine at position 1407 (m5C1407) of 16S rRNA. The polypeptide is Ribosomal RNA small subunit methyltransferase F (Escherichia fergusonii (strain ATCC 35469 / DSM 13698 / CCUG 18766 / IAM 14443 / JCM 21226 / LMG 7866 / NBRC 102419 / NCTC 12128 / CDC 0568-73)).